The following is a 147-amino-acid chain: Hemoglobin subunit beta-2 (147 aa).

Residues 3–147 (HWTAEEKAAI…LVDGLSQGYN (145 aa)) enclose the Globin domain. 2 residues coordinate heme b: histidine 64 and histidine 93.

Belongs to the globin family. In terms of assembly, heterotetramer of two alpha chains and two beta chains. In terms of tissue distribution, red blood cells.

In terms of biological role, involved in oxygen transport from the lung to the various peripheral tissues. The chain is Hemoglobin subunit beta-2 (hbb2) from Xenopus laevis (African clawed frog).